Consider the following 249-residue polypeptide: DNA repair protein RecO (249 aa).

It belongs to the RecO family.

Its function is as follows. Involved in DNA repair and RecF pathway recombination. This is DNA repair protein RecO from Lawsonia intracellularis (strain PHE/MN1-00).